Reading from the N-terminus, the 379-residue chain is 8-amino-7-oxononanoate synthase (379 aa).

Residues R27 and R34 each coordinate substrate. Pyridoxal 5'-phosphate is bound at residue 114–115 (GY). Residue H139 coordinates substrate. Pyridoxal 5'-phosphate contacts are provided by residues S187, 212 to 215 (DDAH), and 232 to 235 (TLSK). Residue K235 is modified to N6-(pyridoxal phosphate)lysine. Residue T344 participates in substrate binding.

This sequence belongs to the class-II pyridoxal-phosphate-dependent aminotransferase family. BioF subfamily. In terms of assembly, homodimer. It depends on pyridoxal 5'-phosphate as a cofactor.

The enzyme catalyses 6-carboxyhexanoyl-[ACP] + L-alanine + H(+) = (8S)-8-amino-7-oxononanoate + holo-[ACP] + CO2. Its pathway is cofactor biosynthesis; biotin biosynthesis. Functionally, catalyzes the decarboxylative condensation of pimeloyl-[acyl-carrier protein] and L-alanine to produce 8-amino-7-oxononanoate (AON), [acyl-carrier protein], and carbon dioxide. The chain is 8-amino-7-oxononanoate synthase from Methylobacterium sp. (strain 4-46).